Here is a 493-residue protein sequence, read N- to C-terminus: MSEELNEHMQVRRDKLAEHMEKGLDPFGGKFERSHQATDLIEKYDSYSKEELEETTDEVTIAGRLMTKRGKGKAGFAHIQDLSGQIQLYVRKDMIGDDAYEVFKSADLGDIVGVTGVMFKTNVGEISVKAKQFQLLTKSLRPLPEKYHGLKDIEQRYRQRYLDLITNPDSRGTFVSRSKIIQSMREYLNGQGFLEVETPMMHSIPGGASARPFITHHNALDIELYMRIAIELHLKRLMVGGLEKVYEIGRVFRNEGVSTRHNPEFTMIELYEAYADYHDIMELTENLVAHIAKQVHGSTTITYGEHEINLEPKWTRLHIVDAVKDATGVDFWKEVSDEEARALAKEHGVQVTESMSYGHVVNEFFEQKVEETLIQPTFIHGHPVEISPLAKKNKEDERFTDRFELFIVGREHANAFSELNDPIDQRARFEAQVKERAEGNDEAHYMDEDFLEALEYGMPPTGGLGIGVDRLVMLLTNSPSIRDVLLFPQMRTK.

Mg(2+) contacts are provided by E404 and E411.

This sequence belongs to the class-II aminoacyl-tRNA synthetase family. As to quaternary structure, homodimer. Requires Mg(2+) as cofactor.

It localises to the cytoplasm. The enzyme catalyses tRNA(Lys) + L-lysine + ATP = L-lysyl-tRNA(Lys) + AMP + diphosphate. In Oceanobacillus iheyensis (strain DSM 14371 / CIP 107618 / JCM 11309 / KCTC 3954 / HTE831), this protein is Lysine--tRNA ligase.